Consider the following 346-residue polypeptide: Quinolinate synthase (346 aa).

Iminosuccinate-binding residues include H47 and S68. Position 113 (C113) interacts with [4Fe-4S] cluster. Iminosuccinate contacts are provided by residues Y139–N141 and S156. C200 is a binding site for [4Fe-4S] cluster. Iminosuccinate-binding positions include H226–E228 and T243. C297 is a [4Fe-4S] cluster binding site.

The protein belongs to the quinolinate synthase family. Type 1 subfamily. [4Fe-4S] cluster serves as cofactor.

The protein localises to the cytoplasm. The catalysed reaction is iminosuccinate + dihydroxyacetone phosphate = quinolinate + phosphate + 2 H2O + H(+). It functions in the pathway cofactor biosynthesis; NAD(+) biosynthesis; quinolinate from iminoaspartate: step 1/1. Its function is as follows. Catalyzes the condensation of iminoaspartate with dihydroxyacetone phosphate to form quinolinate. The protein is Quinolinate synthase of Pseudoalteromonas translucida (strain TAC 125).